The sequence spans 1024 residues: Beta-galactosidase 2 (1024 aa).

Substrate is bound by residues asparagine 103 and aspartate 202. Residue aspartate 202 coordinates Na(+). Mg(2+)-binding residues include glutamate 417, histidine 419, and glutamate 462. Substrate-binding positions include glutamate 462 and 538-541 (EYAH). Catalysis depends on glutamate 462, which acts as the Proton donor. Glutamate 538 functions as the Nucleophile in the catalytic mechanism. Asparagine 598 lines the Mg(2+) pocket. Positions 602 and 605 each coordinate Na(+). The substrate site is built by asparagine 605 and tryptophan 1000.

It belongs to the glycosyl hydrolase 2 family. As to quaternary structure, homotetramer. Mg(2+) serves as cofactor. The cofactor is Na(+).

The catalysed reaction is Hydrolysis of terminal non-reducing beta-D-galactose residues in beta-D-galactosides.. The protein is Beta-galactosidase 2 of Klebsiella pneumoniae subsp. pneumoniae (strain ATCC 700721 / MGH 78578).